The primary structure comprises 219 residues: UPF0502 protein Gmet_0262 (219 aa).

The protein belongs to the UPF0502 family.

This is UPF0502 protein Gmet_0262 from Geobacter metallireducens (strain ATCC 53774 / DSM 7210 / GS-15).